A 372-amino-acid chain; its full sequence is Anhydro-N-acetylmuramic acid kinase (372 aa).

Residue 12–19 (GTSMDALD) coordinates ATP.

It belongs to the anhydro-N-acetylmuramic acid kinase family.

It catalyses the reaction 1,6-anhydro-N-acetyl-beta-muramate + ATP + H2O = N-acetyl-D-muramate 6-phosphate + ADP + H(+). It participates in amino-sugar metabolism; 1,6-anhydro-N-acetylmuramate degradation. It functions in the pathway cell wall biogenesis; peptidoglycan recycling. Functionally, catalyzes the specific phosphorylation of 1,6-anhydro-N-acetylmuramic acid (anhMurNAc) with the simultaneous cleavage of the 1,6-anhydro ring, generating MurNAc-6-P. Is required for the utilization of anhMurNAc either imported from the medium or derived from its own cell wall murein, and thus plays a role in cell wall recycling. The protein is Anhydro-N-acetylmuramic acid kinase of Coxiella burnetii (strain CbuK_Q154) (Coxiella burnetii (strain Q154)).